The primary structure comprises 288 residues: Pyridoxal kinase PdxY (288 aa).

Substrate contacts are provided by residues Ser-12 and Thr-47–Gln-48. Residues Asp-114, Glu-151, Lys-184, and Arg-211–Leu-214 each bind ATP. Substrate is bound at residue Asp-225.

This sequence belongs to the pyridoxine kinase family. PdxY subfamily. In terms of assembly, homodimer. Requires Mg(2+) as cofactor.

It catalyses the reaction pyridoxal + ATP = pyridoxal 5'-phosphate + ADP + H(+). It participates in cofactor metabolism; pyridoxal 5'-phosphate salvage; pyridoxal 5'-phosphate from pyridoxal: step 1/1. In terms of biological role, pyridoxal kinase involved in the salvage pathway of pyridoxal 5'-phosphate (PLP). Catalyzes the phosphorylation of pyridoxal to PLP. This is Pyridoxal kinase PdxY from Pseudomonas syringae pv. tomato (strain ATCC BAA-871 / DC3000).